The following is a 256-amino-acid chain: Thiazole synthase (256 aa).

Catalysis depends on Lys-95, which acts as the Schiff-base intermediate with DXP. 1-deoxy-D-xylulose 5-phosphate contacts are provided by residues Gly-156, 182–183 (AG), and 204–205 (NT).

Belongs to the ThiG family. Homotetramer. Forms heterodimers with either ThiH or ThiS.

The protein resides in the cytoplasm. The catalysed reaction is [ThiS sulfur-carrier protein]-C-terminal-Gly-aminoethanethioate + 2-iminoacetate + 1-deoxy-D-xylulose 5-phosphate = [ThiS sulfur-carrier protein]-C-terminal Gly-Gly + 2-[(2R,5Z)-2-carboxy-4-methylthiazol-5(2H)-ylidene]ethyl phosphate + 2 H2O + H(+). It participates in cofactor biosynthesis; thiamine diphosphate biosynthesis. Functionally, catalyzes the rearrangement of 1-deoxy-D-xylulose 5-phosphate (DXP) to produce the thiazole phosphate moiety of thiamine. Sulfur is provided by the thiocarboxylate moiety of the carrier protein ThiS. In vitro, sulfur can be provided by H(2)S. In Cronobacter sakazakii (strain ATCC BAA-894) (Enterobacter sakazakii), this protein is Thiazole synthase.